Reading from the N-terminus, the 311-residue chain is METKNYSSSTSGFILLGLSSNPKLQKPLFAIFLIMYLLTAVGNVLIILAIYSDPRLHTPMYFFLSNLSFMDICFTTVIVPKMLVNFLSETKIISYVGCLIQMYFFMAFGNTDSYLLASMAIDRLVAICNPLHYDVVMKPWHCLLMLLGSCSISHLHSLFRVLLMSRLSFCASHIIKHFFCDTQPVLKLSCSDTSSSQMVVMTETLAVIVTPFLCTIFSYLQIIVTVLRIPSAAGKWKAFSTCGSHLTVVVLFYGSVIYVYFRPLSMYSVMKGRVATVMYTVVTPMLNPFIYSLRNKDMKRGLKKLRHRIYS.

The Extracellular portion of the chain corresponds to 1 to 26 (METKNYSSSTSGFILLGLSSNPKLQK). An N-linked (GlcNAc...) asparagine glycan is attached at Asn5. The helical transmembrane segment at 27 to 50 (PLFAIFLIMYLLTAVGNVLIILAI) threads the bilayer. Over 51–58 (YSDPRLHT) the chain is Cytoplasmic. The helical transmembrane segment at 59-80 (PMYFFLSNLSFMDICFTTVIVP) threads the bilayer. Topologically, residues 81 to 101 (KMLVNFLSETKIISYVGCLIQ) are extracellular. A disulfide bridge connects residues Cys98 and Cys190. A helical membrane pass occupies residues 102-121 (MYFFMAFGNTDSYLLASMAI). The Cytoplasmic segment spans residues 122-140 (DRLVAICNPLHYDVVMKPW). Residues 141-159 (HCLLMLLGSCSISHLHSLF) form a helical membrane-spanning segment. Over 160 to 197 (RVLLMSRLSFCASHIIKHFFCDTQPVLKLSCSDTSSSQ) the chain is Extracellular. Residues 198–220 (MVVMTETLAVIVTPFLCTIFSYL) form a helical membrane-spanning segment. Over 221–237 (QIIVTVLRIPSAAGKWK) the chain is Cytoplasmic. A helical transmembrane segment spans residues 238 to 260 (AFSTCGSHLTVVVLFYGSVIYVY). Over 261 to 273 (FRPLSMYSVMKGR) the chain is Extracellular. The chain crosses the membrane as a helical span at residues 274–293 (VATVMYTVVTPMLNPFIYSL). Residues 294 to 311 (RNKDMKRGLKKLRHRIYS) are Cytoplasmic-facing.

The protein belongs to the G-protein coupled receptor 1 family.

Its subcellular location is the cell membrane. Its function is as follows. Odorant receptor. The chain is Olfactory receptor 1L4 (OR1L4) from Homo sapiens (Human).